Reading from the N-terminus, the 444-residue chain is N-succinylarginine dihydrolase (444 aa).

Residues 19 to 28 (AGLSFGNVAS), N110, and 137 to 138 (HR) each bind substrate. The active site involves E174. R214 is a binding site for substrate. The active site involves H250. 2 residues coordinate substrate: D252 and N362. C368 (nucleophile) is an active-site residue.

It belongs to the succinylarginine dihydrolase family. As to quaternary structure, homodimer.

It catalyses the reaction N(2)-succinyl-L-arginine + 2 H2O + 2 H(+) = N(2)-succinyl-L-ornithine + 2 NH4(+) + CO2. It participates in amino-acid degradation; L-arginine degradation via AST pathway; L-glutamate and succinate from L-arginine: step 2/5. Functionally, catalyzes the hydrolysis of N(2)-succinylarginine into N(2)-succinylornithine, ammonia and CO(2). The sequence is that of N-succinylarginine dihydrolase from Shewanella baltica (strain OS155 / ATCC BAA-1091).